The sequence spans 264 residues: S-adenosylmethionine decarboxylase proenzyme (264 aa).

Residue Ser-112 is the Schiff-base intermediate with substrate; via pyruvic acid of the active site. A Pyruvic acid (Ser); by autocatalysis modification is found at Ser-112. The Proton acceptor; for processing activity role is filled by His-117. The active-site Proton donor; for catalytic activity is Cys-140.

The protein belongs to the prokaryotic AdoMetDC family. Type 2 subfamily. As to quaternary structure, heterooctamer of four alpha and four beta chains arranged as a tetramer of alpha/beta heterodimers. Requires pyruvate as cofactor. Is synthesized initially as an inactive proenzyme. Formation of the active enzyme involves a self-maturation process in which the active site pyruvoyl group is generated from an internal serine residue via an autocatalytic post-translational modification. Two non-identical subunits are generated from the proenzyme in this reaction, and the pyruvate is formed at the N-terminus of the alpha chain, which is derived from the carboxyl end of the proenzyme. The post-translation cleavage follows an unusual pathway, termed non-hydrolytic serinolysis, in which the side chain hydroxyl group of the serine supplies its oxygen atom to form the C-terminus of the beta chain, while the remainder of the serine residue undergoes an oxidative deamination to produce ammonia and the pyruvoyl group blocking the N-terminus of the alpha chain.

The catalysed reaction is S-adenosyl-L-methionine + H(+) = S-adenosyl 3-(methylsulfanyl)propylamine + CO2. It participates in amine and polyamine biosynthesis; S-adenosylmethioninamine biosynthesis; S-adenosylmethioninamine from S-adenosyl-L-methionine: step 1/1. In terms of biological role, catalyzes the decarboxylation of S-adenosylmethionine to S-adenosylmethioninamine (dcAdoMet), the propylamine donor required for the synthesis of the polyamines spermine and spermidine from the diamine putrescine. The protein is S-adenosylmethionine decarboxylase proenzyme of Salmonella arizonae (strain ATCC BAA-731 / CDC346-86 / RSK2980).